The primary structure comprises 479 residues: MGIDVPLFRQMTPMGHRLSSTRPNYMTSIRLKSTIPHVGRVDLTNSKTMVHVSGRDAAKLLNGLFTLPVSSGAATPFSGVFGAFLNGKGRVITDAFLYTTSNHTEEDQSFVIEFDKAVEDELLLHLKRHRIRAKVKMEKLTDYECIFIWNRDATPDYWRRENECDSGFFQSLCEVAWSVAEVGETSEVEEKNGEPAQKPLYGLLVDDRYPLLGIRMILPAKTSTTYFSAIPSANLTQYNMLRYIRGTPEGSREIPPNKALPMESDLDYMNGLDFNRGCYVGQELTIRTHHTGVVRKRIVPFQLYQEGQEPGEYECQYDPELSGALPPLLDGSNVISLNSQPEERTFASSPFDSPKKEAEPKSEEAASEGGVPSWAKPKETDAAESNLPNKPKPVKLGNILSHHGNVGMALVRLDKIMQQQDIQLAVELPPGPNGEVNYLRAKLYYPLFVTDVSEAEAEAEAELEMERVRKEETHKNGQL.

The N-terminal 99 residues, 1-99 (MGIDVPLFRQ…RVITDAFLYT (99 aa)), are a transit peptide targeting the mitochondrion. The segment covering 341 to 351 (PEERTFASSPF) has biased composition (polar residues). Residues 341 to 395 (PEERTFASSPFDSPKKEAEPKSEEAASEGGVPSWAKPKETDAAESNLPNKPKPVK) are disordered. The span at 353 to 364 (SPKKEAEPKSEE) shows a compositional bias: basic and acidic residues.

The protein belongs to the GcvT family. CAF17/IBA57 subfamily.

Its subcellular location is the mitochondrion matrix. This chain is Iron-sulfur cluster assembly factor IBA57 homolog, mitochondrial (CAF17), found in Yarrowia lipolytica (strain CLIB 122 / E 150) (Yeast).